The following is a 177-amino-acid chain: MSAQSQIRQNYHEESEAGVNRIANLELQASYLYLSVGYYFDRDDVALSKFSKFFRELSEKKRDHAEDFLKFQNKRGGRVVLQDVKKPDDDEWGNGTKAMEVALNLEKSINQAVLDLHKIATDHTDPHMQDYLEHEFLEEEVKLIKKLGDHLTNLRRVKAAEEGMGEYLFDKLTLGED.

Residues 9–158 (QNYHEESEAG…DHLTNLRRVK (150 aa)) form the Ferritin-like diiron domain. Residues Glu26, His64, and Glu106 each coordinate Fe cation.

The protein belongs to the ferritin family. As to quaternary structure, oligomer of 24 subunits. There are two types of subunits: L (light) chain and H (heavy) chain. The functional molecule is roughly spherical and contains a central cavity into which the insoluble mineral iron core is deposited.

Its function is as follows. Stores iron in a soluble, non-toxic, readily available form. Important for iron homeostasis. Iron is taken up in the ferrous form and deposited as ferric hydroxides after oxidation. This chain is Ferritin light chain, oocyte isoform, found in Xenopus laevis (African clawed frog).